We begin with the raw amino-acid sequence, 228 residues long: Large ribosomal subunit protein uL3 (228 aa).

An N5-methylglutamine modification is found at Gln151.

The protein belongs to the universal ribosomal protein uL3 family. As to quaternary structure, part of the 50S ribosomal subunit. Forms a cluster with proteins L14 and L19. Post-translationally, methylated by PrmB.

Its function is as follows. One of the primary rRNA binding proteins, it binds directly near the 3'-end of the 23S rRNA, where it nucleates assembly of the 50S subunit. This is Large ribosomal subunit protein uL3 from Rhizobium meliloti (strain 1021) (Ensifer meliloti).